A 121-amino-acid polypeptide reads, in one-letter code: DNA-directed RNA polymerase subunit omega (121 aa).

Positions 95-121 are disordered; that stretch reads DGDAANDLQGEEDDLGLGLDEAEDLGF. Residues 103 to 121 are compositionally biased toward acidic residues; that stretch reads QGEEDDLGLGLDEAEDLGF.

Belongs to the RNA polymerase subunit omega family. The RNAP catalytic core consists of 2 alpha, 1 beta, 1 beta' and 1 omega subunit. When a sigma factor is associated with the core the holoenzyme is formed, which can initiate transcription.

The catalysed reaction is RNA(n) + a ribonucleoside 5'-triphosphate = RNA(n+1) + diphosphate. Its function is as follows. Promotes RNA polymerase assembly. Latches the N- and C-terminal regions of the beta' subunit thereby facilitating its interaction with the beta and alpha subunits. The polypeptide is DNA-directed RNA polymerase subunit omega (Magnetococcus marinus (strain ATCC BAA-1437 / JCM 17883 / MC-1)).